The following is a 338-amino-acid chain: Secretory carrier-associated membrane protein 1 (338 aa).

Positions 1–64 are disordered; it reads MSDFDSNPFA…NVPNTQPAIM (64 aa). Position 2 is an N-acetylserine (Ser-2). Phosphoserine is present on Ser-2. Residues 2–155 lie on the Cytoplasmic side of the membrane; that stretch reads SDFDSNPFAD…QKTVKLMYYL (154 aa). Thr-45 carries the post-translational modification Phosphothreonine. A helical transmembrane segment spans residues 156–176; sequence WMFHAVTLFLNIFGCLAWFCV. The Lumenal portion of the chain corresponds to 177 to 181; that stretch reads DSSRA. Residues 182–202 traverse the membrane as a helical segment; that stretch reads VDFGLSILWFLLFTPCSFVCW. The Cytoplasmic portion of the chain corresponds to 203–218; sequence YRPLYGAFRSDSSFRF. The chain crosses the membrane as a helical span at residues 219–239; sequence FVFFFVYICQFAVHVLQAAGF. Topologically, residues 240 to 261 are lumenal; that stretch reads HNWGNCGWISSLTGLNKNIPVG. A helical transmembrane segment spans residues 262–282; that stretch reads IMMIIIAALFTASAVISLVMF. Over 283–338 the chain is Cytoplasmic; sequence KKVHGLYRTTGASFEKAQQEFATGVMSNKTVQTAAANAASTAATSAAQNAFKGNQM.

This sequence belongs to the SCAMP family. In terms of assembly, interacts with SYNRG, ITSN1 and SLC9A7.

Its subcellular location is the golgi apparatus. The protein resides in the trans-Golgi network membrane. The protein localises to the recycling endosome membrane. Functions in post-Golgi recycling pathways. Acts as a recycling carrier to the cell surface. This is Secretory carrier-associated membrane protein 1 (Scamp1) from Mus musculus (Mouse).